Here is a 208-residue protein sequence, read N- to C-terminus: LexA repressor (208 aa).

Residues 29 to 49 (VREICGAVGLSSTSTVHGHIN) constitute a DNA-binding region (H-T-H motif). Catalysis depends on for autocatalytic cleavage activity residues S129 and K167.

This sequence belongs to the peptidase S24 family. Homodimer.

The enzyme catalyses Hydrolysis of Ala-|-Gly bond in repressor LexA.. Its function is as follows. Represses a number of genes involved in the response to DNA damage (SOS response), including recA and lexA. In the presence of single-stranded DNA, RecA interacts with LexA causing an autocatalytic cleavage which disrupts the DNA-binding part of LexA, leading to derepression of the SOS regulon and eventually DNA repair. This chain is LexA repressor, found in Limosilactobacillus fermentum (strain NBRC 3956 / LMG 18251) (Lactobacillus fermentum).